Consider the following 439-residue polypeptide: MRHFFKLGLVSAAVLGSQMTLANDFWSQDRQWLLGDWGGERQQLEKQGYKFTASIMSQAATNLDGGYNDSNTLENAGQLTLGANFDLSKIAGWEDTTAAIMITKRDGNSLTLERIKDPRSTTLGNTQEIYGRGKIWRLTQAWVKKGFNDNTVQFKIGRMGMSDDFNSSQCEFQNLLLCGGQLGKSIGSIWYNWPVGLWGTNVKYQFAPEWTLGLGVYEVNPDNVKTQSNSDGFNLDMNNVKGATIPVELAWKPKLAMFNGLPGEYKVGALYSTADANDVGTVSKVHDSKHSFWINTQQQLTQHNDNAKRGLFVSFNGVVNDKATTMVESTQQLALWYKGPFDSRPNDSIGFGLANYVVNKRVRDRQIATNESRGYYEYDDLASNYVPIQHDELNVELNYTYQWSPAVMLRPNIQYIHQPAGVKEVDDAWVAGLSMRLNF.

A signal peptide spans 1-22 (MRHFFKLGLVSAAVLGSQMTLA).

It belongs to the OprB family.

It localises to the cell outer membrane. In terms of biological role, could be involved in the transport of quinate or shikimate. The sequence is that of Putative porin QuiX (quiX) from Acinetobacter baylyi (strain ATCC 33305 / BD413 / ADP1).